The following is a 2073-amino-acid chain: Fatty acid synthase subunit beta (2073 aa).

Positions 1-459 (MVEAEQVHQS…VYSTDDAGDL (459 aa)) are acetyltransferase. Ser270 serves as the catalytic For acetyltransferase activity. The interval 470 to 858 (ALAVMITEKV…TRGIMFWKEL (389 aa)) is enoyl reductase. The residue at position 1122 (Ser1122) is a Phosphoserine. Residues 1155–1644 (GPEYTWFRAI…LPNTELITKL (490 aa)) form a dehydratase region. The active-site For dehydratase activity is the His1361. One can recognise a MaoC-like domain in the interval 1558–1667 (PVFVTPPTNS…VEVLNQETSE (110 aa)). The malonyl/palmitoyl transferase stretch occupies residues 1645–2073 (SHTGMINGRK…LQNWDEYESS (429 aa)). Ser1828 acts as the For malonyltransferase activity in catalysis. Ser2073 is subject to Phosphoserine.

The protein belongs to the fungal fatty acid synthetase subunit beta family. In terms of assembly, [Alpha(6)beta(6)] hexamers of two multifunctional subunits (alpha and beta).

It catalyses the reaction acetyl-CoA + n malonyl-CoA + 2n NADPH + 4n H(+) = a long-chain-acyl-CoA + n CoA + n CO2 + 2n NADP(+).. The catalysed reaction is holo-[ACP] + acetyl-CoA = acetyl-[ACP] + CoA. The enzyme catalyses holo-[ACP] + malonyl-CoA = malonyl-[ACP] + CoA. It carries out the reaction a (3R)-hydroxyacyl-[ACP] = a (2E)-enoyl-[ACP] + H2O. It catalyses the reaction a 2,3-saturated acyl-[ACP] + NAD(+) = a (2E)-enoyl-[ACP] + NADH + H(+). The catalysed reaction is (9Z)-octadecenoyl-[ACP] + H2O = (9Z)-octadecenoate + holo-[ACP] + H(+). In terms of biological role, fatty acid synthetase catalyzes the formation of long-chain fatty acids from acetyl-CoA, malonyl-CoA and NADPH. The beta subunit contains domains for: [acyl-carrier-protein] acetyltransferase and malonyltransferase, S-acyl fatty acid synthase thioesterase, enoyl-[acyl-carrier-protein] reductase, and 3-hydroxypalmitoyl-[acyl-carrier-protein] dehydratase. This is Fatty acid synthase subunit beta (fas1) from Schizosaccharomyces pombe (strain 972 / ATCC 24843) (Fission yeast).